The following is a 914-amino-acid chain: Polyribonucleotide nucleotidyltransferase (914 aa).

The segment at 407–427 (YMHNYEMPPYSTGETGRVGSP) is disordered. Mg(2+) is bound by residues aspartate 521 and aspartate 527. The region spanning 587–646 (PRIITTSVPVEKIGEVIGPKGKMINQIQEDTGAEIAIEDDGTVFISSEGGEAAKKAKSII) is the KH domain. Positions 658–730 (GETYNGKVVK…DRGKISLAIP (73 aa)) constitute an S1 motif domain. The segment at 727 to 914 (LAIPGFEDQE…VRRDFDPFED (188 aa)) is disordered. Basic and acidic residues-rich tracts occupy residues 742 to 789 (SRGD…RRSD), 797 to 865 (DRPR…DRRG), and 873 to 899 (RGSD…ERTE).

The protein belongs to the polyribonucleotide nucleotidyltransferase family. Mg(2+) serves as cofactor.

It localises to the cytoplasm. The enzyme catalyses RNA(n+1) + phosphate = RNA(n) + a ribonucleoside 5'-diphosphate. Functionally, involved in mRNA degradation. Catalyzes the phosphorolysis of single-stranded polyribonucleotides processively in the 3'- to 5'-direction. In Bifidobacterium longum subsp. infantis (strain ATCC 15697 / DSM 20088 / JCM 1222 / NCTC 11817 / S12), this protein is Polyribonucleotide nucleotidyltransferase.